The sequence spans 126 residues: Protein ApaG (126 aa).

Residues 2-126 (SDPRYQVDVS…FRLAVPGALH (125 aa)) enclose the ApaG domain.

In Pseudomonas fluorescens (strain ATCC BAA-477 / NRRL B-23932 / Pf-5), this protein is Protein ApaG.